The chain runs to 400 residues: MLKVEMLSTGDEVLYGQIVDTNAAWLADFFFHQGLPLSRRNTVGDNLDDLVTILRERSQHADVLIVNGGLGPTSDDLSALAAATAKGEGLVLHEAWLKEMERYFHERGRVMAPSNRKQAELPASAEFINNPVGTACGFAVQLNRCLMFFTPGVPSEFKVMVEHEILPRLRERFSLPQPPVCLRLTTFGRSESDLAQSLDTLQLPPGVTMGYRSSMPIIELKLTGPASEQQAMEKLWLDVKRVAGQSVIFEGTEGLPAQISRELQNRQFSLTLSEQFTGGLLALQLSRAGAPLLACEVIPSQEETLAQTAHWITERRANHFAGLALAVSGFENEHLNFALATPDGTFALRVRFSTTRYSLAIRQEVCAMMALNMLRRWLNGQDIASEHGWIEVVESMTLSV.

This sequence belongs to the CinA family.

This chain is CinA-like protein, found in Shigella flexneri.